The primary structure comprises 93 residues: Large ribosomal subunit protein eL37A (93 aa).

Residues cysteine 19, cysteine 22, cysteine 34, and cysteine 37 each contribute to the Zn(2+) site. The C4-type zinc finger occupies 19–37; that stretch reads CRRCGRSSYHIQKSTCAQC.

It belongs to the eukaryotic ribosomal protein eL37 family. Zn(2+) is required as a cofactor.

In terms of biological role, binds to the 23S rRNA. The chain is Large ribosomal subunit protein eL37A from Drosophila melanogaster (Fruit fly).